A 919-amino-acid chain; its full sequence is Isoleucine--tRNA ligase (919 aa).

The 'HIGH' region motif lies at 57–67 (PYANGHTHIGH). E569 lines the L-isoleucyl-5'-AMP pocket. Positions 610 to 614 (KMSKS) match the 'KMSKS' region motif. K613 provides a ligand contact to ATP. Positions 895, 898, 910, and 913 each coordinate Zn(2+).

This sequence belongs to the class-I aminoacyl-tRNA synthetase family. IleS type 1 subfamily. Monomer. Requires Zn(2+) as cofactor.

It localises to the cytoplasm. It carries out the reaction tRNA(Ile) + L-isoleucine + ATP = L-isoleucyl-tRNA(Ile) + AMP + diphosphate. Functionally, catalyzes the attachment of isoleucine to tRNA(Ile). As IleRS can inadvertently accommodate and process structurally similar amino acids such as valine, to avoid such errors it has two additional distinct tRNA(Ile)-dependent editing activities. One activity is designated as 'pretransfer' editing and involves the hydrolysis of activated Val-AMP. The other activity is designated 'posttransfer' editing and involves deacylation of mischarged Val-tRNA(Ile). The polypeptide is Isoleucine--tRNA ligase (Sulfurimonas denitrificans (strain ATCC 33889 / DSM 1251) (Thiomicrospira denitrificans (strain ATCC 33889 / DSM 1251))).